Here is a 457-residue protein sequence, read N- to C-terminus: Acetylcholine receptor subunit alpha-1-B (457 aa).

The signal sequence occupies residues methionine 1–glycine 20. Over threonine 21–leucine 230 the chain is Extracellular. Cystine bridges form between cysteine 148/cysteine 162 and cysteine 212/cysteine 213. A glycan (N-linked (GlcNAc...) asparagine) is linked at asparagine 161. Helical transmembrane passes span proline 231–leucine 255, methionine 263–valine 281, and tyrosine 297–isoleucine 316. The Cytoplasmic portion of the chain corresponds to asparagine 317–histidine 428. A helical membrane pass occupies residues isoleucine 429–alanine 447.

It belongs to the ligand-gated ion channel (TC 1.A.9) family. Acetylcholine receptor (TC 1.A.9.1) subfamily. Alpha-1/CHRNA1 sub-subfamily. In terms of assembly, one of the alpha chains that assemble within the acetylcholine receptor, a pentamer of two alpha chains, a beta, a delta, and a gamma or epsilon chains.

The protein resides in the postsynaptic cell membrane. It is found in the cell membrane. It carries out the reaction K(+)(in) = K(+)(out). The enzyme catalyses Na(+)(in) = Na(+)(out). Functionally, upon acetylcholine binding, the AChR responds by an extensive change in conformation that affects all subunits and leads to opening of an ion-conducting channel across the plasma membrane. The sequence is that of Acetylcholine receptor subunit alpha-1-B (chrna1-b) from Xenopus laevis (African clawed frog).